Reading from the N-terminus, the 507-residue chain is Histidine ammonia-lyase (507 aa).

A cross-link (5-imidazolinone (Ala-Gly)) is located at residues 145–147 (ASG). Serine 146 carries the 2,3-didehydroalanine (Ser) modification.

This sequence belongs to the PAL/histidase family. In terms of processing, contains an active site 4-methylidene-imidazol-5-one (MIO), which is formed autocatalytically by cyclization and dehydration of residues Ala-Ser-Gly.

It localises to the cytoplasm. It catalyses the reaction L-histidine = trans-urocanate + NH4(+). It participates in amino-acid degradation; L-histidine degradation into L-glutamate; N-formimidoyl-L-glutamate from L-histidine: step 1/3. The protein is Histidine ammonia-lyase of Treponema denticola (strain ATCC 35405 / DSM 14222 / CIP 103919 / JCM 8153 / KCTC 15104).